The sequence spans 984 residues: Vacuolar sorting protein 3 (984 aa).

The 319-residue stretch at 21-339 (KIRALSLSPI…GCGPSLLAAD (319 aa)) folds into the CNH domain. A CHCR repeat occupies 663 to 844 (VLTSDKRTEE…YLDPQNGKEP (182 aa)).

This sequence belongs to the TRAP1 family. As to quaternary structure, component of the class C core vacuole/endosome tethering (CORVET) complex. Their common core is composed of the class C Vps core proteins VPS11, VCL1, VPS18 and VPS33, which in CORVET further associates with VPS3. Interacts directly with VPS11. Binds to RABF2A and RABF2B.

It is found in the endosome membrane. The protein localises to the cytoplasm. Essential protein required during embryogenesis. Believed to act as a component of the putative class C core vacuole/endosome tethering (CORVET) endosomal tethering complexes. CORVET is required for vacuolar transport of SYP22. Involved in root development. Plays a role in vesicle-mediated protein trafficking of the endocytic membrane transport pathway. This Arabidopsis thaliana (Mouse-ear cress) protein is Vacuolar sorting protein 3.